Consider the following 201-residue polypeptide: Large ribosomal subunit protein uL4 (201 aa).

A disordered region spans residues G42–R67.

This sequence belongs to the universal ribosomal protein uL4 family. In terms of assembly, part of the 50S ribosomal subunit.

Functionally, one of the primary rRNA binding proteins, this protein initially binds near the 5'-end of the 23S rRNA. It is important during the early stages of 50S assembly. It makes multiple contacts with different domains of the 23S rRNA in the assembled 50S subunit and ribosome. Its function is as follows. Forms part of the polypeptide exit tunnel. This chain is Large ribosomal subunit protein uL4, found in Legionella pneumophila (strain Paris).